We begin with the raw amino-acid sequence, 61 residues long: Small ribosomal subunit protein uS14 (61 aa).

Zn(2+) contacts are provided by Cys24, Cys27, Cys40, and Cys43.

Belongs to the universal ribosomal protein uS14 family. Zinc-binding uS14 subfamily. In terms of assembly, part of the 30S ribosomal subunit. Contacts proteins S3 and S10. It depends on Zn(2+) as a cofactor.

In terms of biological role, binds 16S rRNA, required for the assembly of 30S particles and may also be responsible for determining the conformation of the 16S rRNA at the A site. This is Small ribosomal subunit protein uS14 from Desulfotalea psychrophila (strain LSv54 / DSM 12343).